The following is a 142-amino-acid chain: Putative pre-16S rRNA nuclease (142 aa).

Belongs to the YqgF nuclease family.

It is found in the cytoplasm. Functionally, could be a nuclease involved in processing of the 5'-end of pre-16S rRNA. The chain is Putative pre-16S rRNA nuclease from Nitratidesulfovibrio vulgaris (strain DP4) (Desulfovibrio vulgaris).